The chain runs to 137 residues: DNA-directed RNA polymerase subunit omega (137 aa).

Residues 78–137 (DEPEPEAVPLLSSSPAAAAVAPQAASGDDNDIQFDRMSEEDLLRGLENLAPPTETEDEGD) are disordered. A compositionally biased stretch (low complexity) spans 84–103 (AVPLLSSSPAAAAVAPQAAS). A compositionally biased stretch (basic and acidic residues) spans 110–121 (QFDRMSEEDLLR).

This sequence belongs to the RNA polymerase subunit omega family. The RNAP catalytic core consists of 2 alpha, 1 beta, 1 beta' and 1 omega subunit. When a sigma factor is associated with the core the holoenzyme is formed, which can initiate transcription.

It carries out the reaction RNA(n) + a ribonucleoside 5'-triphosphate = RNA(n+1) + diphosphate. In terms of biological role, promotes RNA polymerase assembly. Latches the N- and C-terminal regions of the beta' subunit thereby facilitating its interaction with the beta and alpha subunits. The sequence is that of DNA-directed RNA polymerase subunit omega from Methylobacterium sp. (strain 4-46).